Reading from the N-terminus, the 156-residue chain is Small ribosomal subunit protein uS7 (156 aa).

Belongs to the universal ribosomal protein uS7 family. In terms of assembly, part of the 30S ribosomal subunit. Contacts proteins S9 and S11.

In terms of biological role, one of the primary rRNA binding proteins, it binds directly to 16S rRNA where it nucleates assembly of the head domain of the 30S subunit. Is located at the subunit interface close to the decoding center, probably blocks exit of the E-site tRNA. This chain is Small ribosomal subunit protein uS7, found in Mycoplasmopsis agalactiae (strain NCTC 10123 / CIP 59.7 / PG2) (Mycoplasma agalactiae).